The following is a 423-amino-acid chain: Growth hormone-releasing hormone receptor (423 aa).

An N-terminal signal peptide occupies residues 1 to 22; the sequence is MDSGVWAACIFCLLSSLPVALG. Over 23-130 the chain is Extracellular; sequence HVHPECDFIT…DEKSYFSTVR (108 aa). 3 disulfide bridges follow: cysteine 41-cysteine 64, cysteine 55-cysteine 96, and cysteine 78-cysteine 112. Asparagine 50 carries an N-linked (GlcNAc...) asparagine glycan. The helical transmembrane segment at 131–151 threads the bilayer; the sequence is IVYTTGHSVSAVALFVAIAIL. Residues 152–167 are Cytoplasmic-facing; the sequence is VALRRLHCPRNYIHSQ. Residues 168–188 traverse the membrane as a helical segment; the sequence is LFATFILKAGAVFLKDAALFH. At 189–210 the chain is on the extracellular side; that stretch reads SENTDHCSFSTVLCKVSVATSH. The chain crosses the membrane as a helical span at residues 211–231; sequence FATMTNFSWLLAEAVYLTCLL. The Cytoplasmic portion of the chain corresponds to 232–240; the sequence is ASTSPSTRR. The helical transmembrane segment at 241–261 threads the bilayer; it reads AFWWLVLAGWGLPLLFTGTWV. The Extracellular segment spans residues 262–283; it reads GCKLAFEDVACWDLDDSSPYWW. A helical membrane pass occupies residues 284-304; it reads IIKGPIVLSVGVNFGLFLNII. Residues 305–331 are Cytoplasmic-facing; it reads RILLRKLEPAQGSLHTQPQYWRLSKST. A helical transmembrane segment spans residues 332 to 352; the sequence is LLLIPLFGIHYVIFNFLPDSA. Over 353-357 the chain is Extracellular; sequence GLGIR. A helical transmembrane segment spans residues 358 to 378; sequence LPLELGLGSFQGFIVAILYCF. Over 379–423 the chain is Cytoplasmic; sequence LNQEVRTEISRRWHGHDPELLPAWRTHAKWAKPSRSRAKVLTTVC.

Belongs to the G-protein coupled receptor 2 family. In terms of tissue distribution, pituitary gland. Also detected in the lymphocytes and thymocytes.

It is found in the cell membrane. Receptor for GRF, coupled to G proteins which activate adenylyl cyclase. Stimulates somatotroph cell growth, growth hormone gene transcription and growth hormone secretion. In Sus scrofa (Pig), this protein is Growth hormone-releasing hormone receptor (GHRHR).